Here is a 254-residue protein sequence, read N- to C-terminus: NAD-dependent protein deacylase 2 (254 aa).

Residues 1-254 enclose the Deacetylase sirtuin-type domain; that stretch reads MDEHSIMQAV…LPALVRRLGV (254 aa). Residue 24–44 coordinates NAD(+); sequence GAGMSADSGLETYRDPETGVW. Residues Tyr-69 and Arg-72 each contribute to the substrate site. 105 to 108 contacts NAD(+); it reads QNID. The Proton acceptor role is filled by His-123. Residues Cys-131, Cys-134, Cys-157, and Cys-160 each coordinate Zn(2+). NAD(+)-binding positions include 197–199 and Ala-241; that span reads GTS.

The protein belongs to the sirtuin family. Class III subfamily. The cofactor is Zn(2+).

The protein localises to the cytoplasm. It carries out the reaction N(6)-acetyl-L-lysyl-[protein] + NAD(+) + H2O = 2''-O-acetyl-ADP-D-ribose + nicotinamide + L-lysyl-[protein]. It catalyses the reaction N(6)-succinyl-L-lysyl-[protein] + NAD(+) + H2O = 2''-O-succinyl-ADP-D-ribose + nicotinamide + L-lysyl-[protein]. Functionally, NAD-dependent lysine deacetylase and desuccinylase that specifically removes acetyl and succinyl groups on target proteins. Modulates the activities of several proteins which are inactive in their acylated form. The polypeptide is NAD-dependent protein deacylase 2 (Corynebacterium efficiens (strain DSM 44549 / YS-314 / AJ 12310 / JCM 11189 / NBRC 100395)).